The sequence spans 419 residues: Putative competence-damage inducible protein (419 aa).

It belongs to the CinA family.

In Lysinibacillus sphaericus (strain C3-41), this protein is Putative competence-damage inducible protein.